Reading from the N-terminus, the 313-residue chain is Putative S-adenosyl-L-methionine-dependent methyltransferase MMAR_0955 (313 aa).

S-adenosyl-L-methionine-binding positions include Asp-132 and 161 to 162 (DL).

The protein belongs to the UPF0677 family.

Exhibits S-adenosyl-L-methionine-dependent methyltransferase activity. The chain is Putative S-adenosyl-L-methionine-dependent methyltransferase MMAR_0955 from Mycobacterium marinum (strain ATCC BAA-535 / M).